The primary structure comprises 255 residues: Ribonuclease HII (255 aa).

Residues 70–255 enclose the RNase H type-2 domain; it reads DLVAGIDEVG…FEPVPEFLIK (186 aa). The a divalent metal cation site is built by aspartate 76, glutamate 77, and aspartate 168.

This sequence belongs to the RNase HII family. Requires Mn(2+) as cofactor. The cofactor is Mg(2+).

It is found in the cytoplasm. The enzyme catalyses Endonucleolytic cleavage to 5'-phosphomonoester.. Its function is as follows. Endonuclease that specifically degrades the RNA of RNA-DNA hybrids. This is Ribonuclease HII from Pediococcus pentosaceus (strain ATCC 25745 / CCUG 21536 / LMG 10740 / 183-1w).